The sequence spans 22 residues: Odorant-binding protein 1 (22 aa).

This sequence belongs to the calycin superfamily. Lipocalin family. Homodimer. Post-translationally, the N-terminus is blocked.

In terms of biological role, binds the chemical odorant, 2-isobutyl-3-methoxypyrazine. In Oryctolagus cuniculus (Rabbit), this protein is Odorant-binding protein 1.